We begin with the raw amino-acid sequence, 346 residues long: UDP-N-acetylenolpyruvoylglucosamine reductase (346 aa).

Residues 18–189 enclose the FAD-binding PCMH-type domain; that stretch reads LRAQARAFIA…VSVVFALKTH (172 aa). The active site involves R165. The Proton donor role is filled by S240. Residue E336 is part of the active site.

It belongs to the MurB family. The cofactor is FAD.

The protein resides in the cytoplasm. The enzyme catalyses UDP-N-acetyl-alpha-D-muramate + NADP(+) = UDP-N-acetyl-3-O-(1-carboxyvinyl)-alpha-D-glucosamine + NADPH + H(+). It participates in cell wall biogenesis; peptidoglycan biosynthesis. Its function is as follows. Cell wall formation. In Neisseria meningitidis serogroup A / serotype 4A (strain DSM 15465 / Z2491), this protein is UDP-N-acetylenolpyruvoylglucosamine reductase.